Consider the following 122-residue polypeptide: Acyl carrier protein 1, mitochondrial (122 aa).

A mitochondrion-targeting transit peptide spans 1–34 (MALRNAILRHLRVPVQTLGLNQSKIGFLGTIRSF). A Carrier domain is found at 44 to 119 (EAVVDRVLDV…LAIEYVYNHP (76 aa)). Serine 79 bears the O-(pantetheine 4'-phosphoryl)serine mark.

The protein belongs to the acyl carrier protein (ACP) family. In terms of assembly, complex I is composed of at least 49 different subunits. In terms of processing, 4'-phosphopantetheine is transferred from CoA to a specific serine of the apo-ACP-like protein.

Its subcellular location is the mitochondrion. Its pathway is lipid metabolism; fatty acid biosynthesis. Functionally, carrier of the growing fatty acid chain in fatty acid biosynthesis. May be involved in the synthesis of short and medium chain fatty acids. Accessory and non-catalytic subunit of the mitochondrial membrane respiratory chain NADH dehydrogenase (Complex I), which functions in the transfer of electrons from NADH to the respiratory chain. The sequence is that of Acyl carrier protein 1, mitochondrial (MTACP1) from Arabidopsis thaliana (Mouse-ear cress).